The chain runs to 150 residues: UPF0178 protein Maqu_2186 (150 aa).

The protein belongs to the UPF0178 family.

This is UPF0178 protein Maqu_2186 from Marinobacter nauticus (strain ATCC 700491 / DSM 11845 / VT8) (Marinobacter aquaeolei).